The following is a 320-amino-acid chain: ADP/ATP translocase 4 (320 aa).

Residues 1–20 (MSNESSKKQSSKKALFDPVS) lie on the Mitochondrial intermembrane side of the membrane. The Solcar 1 repeat unit spans residues 19 to 111 (VSFSKDLLAG…FAFKDKYKEL (93 aa)). Residues 21–50 (FSKDLLAGGVAAAVSKTAVAPIERVKLLLQ) form a helical membrane-spanning segment. Residues 51-87 (VQASSKQISPEARYKGMLDCLVRIPREQGFLSYWRGN) lie on the Mitochondrial matrix side of the membrane. Residues 88-112 (LANVIRYFPTQALNFAFKDKYKELF) traverse the membrane as a helical segment. 2 residues coordinate ADP: R93 and K105. The Mitochondrial intermembrane portion of the chain corresponds to 113–122 (MSGVNKEKQF). The helical transmembrane segment at 123–143 (WRWFLANLASGGAAGATSLCV) threads the bilayer. Solcar repeat units follow at residues 124-214 (RWFL…VKGL) and 221-308 (TPFL…IKEF). Over 144–191 (VYPLDFARTRLGVDIGKGPEQRQFTGLGDCIMKIAKSDGLIGLYQGFG) the chain is Mitochondrial matrix. The helical transmembrane segment at 192 to 212 (VSVQGIIVYRASYFGAYDTVK) threads the bilayer. Topologically, residues 213–223 (GLLPKPKETPF) are mitochondrial intermembrane. Residues 224-244 (LVSFIIAQIVTTCSGILSYPF) form a helical membrane-spanning segment. The Mitochondrial matrix segment spans residues 245–284 (DTVRRRMMMQSGESDRQYKGTIDCFLKIYRHEGVPAFFRG). R248 contacts ADP. The segment at 248 to 253 (RRRMMM) is important for transport activity. Residues 248 to 253 (RRRMMM) carry the Nucleotide carrier signature motif motif. Residues 285–302 (AFSNILRGTGGALVLVLY) traverse the membrane as a helical segment. Residues 303–320 (DKIKEFLNIDVGGSSSGD) lie on the Mitochondrial intermembrane side of the membrane.

Belongs to the mitochondrial carrier (TC 2.A.29) family. Monomer. Specifically expressed in undifferentiated embryonic stem cells and germ cells. Expression is down-regulated after embryonic stem cells differentiation. In adults, only expressed in developing gametes in testis. In testis, expressed at higher level in spermatocytes. Expression is probably associated with entry of the male germ cells into meiosis. Expressed at very low level in Sertoli cells.

It is found in the mitochondrion inner membrane. The protein localises to the membrane. It localises to the cell projection. Its subcellular location is the cilium. The protein resides in the flagellum membrane. It catalyses the reaction ADP(in) + ATP(out) = ADP(out) + ATP(in). The enzyme catalyses dATP(out) + ADP(in) = dATP(in) + ADP(out). The catalysed reaction is dADP(in) + ADP(out) = dADP(out) + ADP(in). It carries out the reaction H(+)(in) = H(+)(out). With respect to regulation, the matrix-open state (m-state) is inhibited by the membrane-permeable bongkrekic acid (BKA). The cytoplasmic-open state (c-state) is inhibited by the membrane-impermeable toxic inhibitor carboxyatractyloside (CATR). Proton transporter activity is inhibited by ADP:ATP antiporter activity. Functionally, ADP:ATP antiporter that mediates import of ADP into the mitochondrial matrix for ATP synthesis, and export of ATP out to fuel the cell. Cycles between the cytoplasmic-open state (c-state) and the matrix-open state (m-state): operates by the alternating access mechanism with a single substrate-binding site intermittently exposed to either the cytosolic (c-state) or matrix (m-state) side of the inner mitochondrial membrane. Specifically required during spermatogenesis, probably to mediate ADP:ATP exchange in spermatocytes. Large ATP supplies from mitochondria may be critical for normal progression of spermatogenesis during early stages of meiotic prophase I, including DNA double-strand break repair and chromosomal synapsis. In addition to its ADP:ATP antiporter activity, also involved in mitochondrial uncoupling and mitochondrial permeability transition pore (mPTP) activity. Plays a role in mitochondrial uncoupling by acting as a proton transporter: proton transport uncouples the proton flows via the electron transport chain and ATP synthase to reduce the efficiency of ATP production and cause mitochondrial thermogenesis. Proton transporter activity is inhibited by ADP:ATP antiporter activity, suggesting that SLC25A31/ANT4 acts as a master regulator of mitochondrial energy output by maintaining a delicate balance between ATP production (ADP:ATP antiporter activity) and thermogenesis (proton transporter activity). Proton transporter activity requires free fatty acids as cofactor, but does not transport it. Among nucleotides, may also exchange ADP for dATP and dADP. Also plays a key role in mPTP opening, a non-specific pore that enables free passage of the mitochondrial membranes to solutes of up to 1.5 kDa, and which contributes to cell death. It is however unclear if SLC25A31/ANT4 constitutes a pore-forming component of mPTP or regulates it. In Mus musculus (Mouse), this protein is ADP/ATP translocase 4.